The chain runs to 155 residues: Small ribosomal subunit protein uS7c (155 aa).

This sequence belongs to the universal ribosomal protein uS7 family. Part of the 30S ribosomal subunit.

The protein resides in the plastid. It is found in the chloroplast. In terms of biological role, one of the primary rRNA binding proteins, it binds directly to 16S rRNA where it nucleates assembly of the head domain of the 30S subunit. The polypeptide is Small ribosomal subunit protein uS7c (rps7) (Butomus umbellatus (Flowering rush)).